A 127-amino-acid chain; its full sequence is Ribonuclease P protein component (127 aa).

It belongs to the RnpA family. As to quaternary structure, consists of a catalytic RNA component (M1 or rnpB) and a protein subunit.

The catalysed reaction is Endonucleolytic cleavage of RNA, removing 5'-extranucleotides from tRNA precursor.. Functionally, RNaseP catalyzes the removal of the 5'-leader sequence from pre-tRNA to produce the mature 5'-terminus. It can also cleave other RNA substrates such as 4.5S RNA. The protein component plays an auxiliary but essential role in vivo by binding to the 5'-leader sequence and broadening the substrate specificity of the ribozyme. The sequence is that of Ribonuclease P protein component from Agrobacterium fabrum (strain C58 / ATCC 33970) (Agrobacterium tumefaciens (strain C58)).